A 340-amino-acid chain; its full sequence is Protein-arginine kinase (340 aa).

Residues 21–242 (VVLSSRIRLA…EQIIMQERIA (222 aa)) form the Phosphagen kinase C-terminal domain. Residues 24-28 (SSRIR), H79, R113, 164-168 (RASVM), and 195-200 (RGIYGE) contribute to the ATP site.

This sequence belongs to the ATP:guanido phosphotransferase family.

The enzyme catalyses L-arginyl-[protein] + ATP = N(omega)-phospho-L-arginyl-[protein] + ADP + H(+). Functionally, catalyzes the specific phosphorylation of arginine residues in proteins. The sequence is that of Protein-arginine kinase from Listeria monocytogenes serotype 4a (strain HCC23).